The following is a 199-amino-acid chain: Dephospho-CoA kinase (199 aa).

A DPCK domain is found at 3-199; sequence RIGLTGGIGS…HCKYLQIAQT (197 aa). 11 to 16 is an ATP binding site; it reads GSGKST.

It belongs to the CoaE family.

Its subcellular location is the cytoplasm. The catalysed reaction is 3'-dephospho-CoA + ATP = ADP + CoA + H(+). It functions in the pathway cofactor biosynthesis; coenzyme A biosynthesis; CoA from (R)-pantothenate: step 5/5. Catalyzes the phosphorylation of the 3'-hydroxyl group of dephosphocoenzyme A to form coenzyme A. This chain is Dephospho-CoA kinase, found in Coxiella burnetii (strain RSA 493 / Nine Mile phase I).